The primary structure comprises 473 residues: Xylan O-acetyltransferase 14 (473 aa).

Residues 1-17 show a composition bias toward polar residues; the sequence is MTTTGSTPPRKNRSNVT. The interval 1–22 is disordered; the sequence is MTTTGSTPPRKNRSNVTGGEGG. At 1-54 the chain is on the cytoplasmic side; it reads MTTTGSTPPRKNRSNVTGGEGGSLEEYAWRAAGEAAAAKKATRAWGVSVSLRSH. The helical; Signal-anchor for type II membrane protein transmembrane segment at 55–75 threads the bilayer; that stretch reads FSSLVLLLLLLLVALAVSATT. The interval 76 to 101 is disordered; sequence KNGDPAETPHAPPLPPPASIKLPSSS. Topologically, residues 76–473 are lumenal; sequence KNGDPAETPH…NQLLYAHIVS (398 aa). 4 cysteine pairs are disulfide-bonded: cysteine 108-cysteine 159, cysteine 130-cysteine 195, cysteine 139-cysteine 455, and cysteine 370-cysteine 451. The GDS motif motif lies at 182–184; the sequence is GDS. Serine 184 serves as the catalytic Nucleophile. N-linked (GlcNAc...) asparagine glycans are attached at residues asparagine 209, asparagine 223, and asparagine 414. Catalysis depends on aspartate 450, which acts as the Proton donor. The DXXH motif signature appears at 450–453; it reads DCIH. Histidine 453 (proton acceptor) is an active-site residue.

The protein belongs to the PC-esterase family. TBL subfamily.

The protein localises to the golgi apparatus membrane. Xylan acetyltransferase required for 2-O- and 3-O-monoacetylation of xylosyl residues in xylan. Catalyzes the 2-O-acetylation of xylan, followed by nonenzymatic acetyl migration to the O-3 position, resulting in products that are monoacetylated at both O-2 and O-3 positions. The polypeptide is Xylan O-acetyltransferase 14 (Oryza sativa subsp. japonica (Rice)).